The chain runs to 251 residues: Sugar fermentation stimulation protein homolog (251 aa).

The protein belongs to the SfsA family.

This chain is Sugar fermentation stimulation protein homolog, found in Prochlorococcus marinus (strain MIT 9313).